The sequence spans 313 residues: Porphobilinogen deaminase (313 aa).

Residue cysteine 241 is modified to S-(dipyrrolylmethanemethyl)cysteine.

It belongs to the HMBS family. As to quaternary structure, monomer. Requires dipyrromethane as cofactor.

It carries out the reaction 4 porphobilinogen + H2O = hydroxymethylbilane + 4 NH4(+). It functions in the pathway porphyrin-containing compound metabolism; protoporphyrin-IX biosynthesis; coproporphyrinogen-III from 5-aminolevulinate: step 2/4. Tetrapolymerization of the monopyrrole PBG into the hydroxymethylbilane pre-uroporphyrinogen in several discrete steps. This is Porphobilinogen deaminase from Idiomarina loihiensis (strain ATCC BAA-735 / DSM 15497 / L2-TR).